Consider the following 419-residue polypeptide: Gamma-glutamyl phosphate reductase (419 aa).

It belongs to the gamma-glutamyl phosphate reductase family.

The protein resides in the cytoplasm. It catalyses the reaction L-glutamate 5-semialdehyde + phosphate + NADP(+) = L-glutamyl 5-phosphate + NADPH + H(+). It functions in the pathway amino-acid biosynthesis; L-proline biosynthesis; L-glutamate 5-semialdehyde from L-glutamate: step 2/2. Catalyzes the NADPH-dependent reduction of L-glutamate 5-phosphate into L-glutamate 5-semialdehyde and phosphate. The product spontaneously undergoes cyclization to form 1-pyrroline-5-carboxylate. This Yersinia pseudotuberculosis serotype O:1b (strain IP 31758) protein is Gamma-glutamyl phosphate reductase.